The primary structure comprises 267 residues: Acyl-[acyl-carrier-protein]--UDP-N-acetylglucosamine O-acyltransferase (267 aa).

Belongs to the transferase hexapeptide repeat family. LpxA subfamily. As to quaternary structure, homotrimer.

The protein localises to the cytoplasm. It catalyses the reaction a (3R)-hydroxyacyl-[ACP] + UDP-N-acetyl-alpha-D-glucosamine = a UDP-3-O-[(3R)-3-hydroxyacyl]-N-acetyl-alpha-D-glucosamine + holo-[ACP]. The protein operates within glycolipid biosynthesis; lipid IV(A) biosynthesis; lipid IV(A) from (3R)-3-hydroxytetradecanoyl-[acyl-carrier-protein] and UDP-N-acetyl-alpha-D-glucosamine: step 1/6. Its function is as follows. Involved in the biosynthesis of lipid A, a phosphorylated glycolipid that anchors the lipopolysaccharide to the outer membrane of the cell. This is Acyl-[acyl-carrier-protein]--UDP-N-acetylglucosamine O-acyltransferase from Cupriavidus necator (strain ATCC 17699 / DSM 428 / KCTC 22496 / NCIMB 10442 / H16 / Stanier 337) (Ralstonia eutropha).